Here is a 60-residue protein sequence, read N- to C-terminus: UPF0434 protein CKO_02153 (60 aa).

This sequence belongs to the UPF0434 family.

The polypeptide is UPF0434 protein CKO_02153 (Citrobacter koseri (strain ATCC BAA-895 / CDC 4225-83 / SGSC4696)).